A 245-amino-acid chain; its full sequence is Chlorophyll a-b binding protein 1B-21, chloroplastic (245 aa).

Residues 1–44 constitute a chloroplast transit peptide; it reads MASSSGLRSCSAVGVPSLLAPSSRSGRSGLPFCAYATTSGRVTM. Position 48 (Trp48) interacts with chlorophyll b. Residues Phe68, Glu87, and His90 each coordinate chlorophyll a. Arg92 provides a ligand contact to chlorophyll b. A helical transmembrane segment spans residues 93 to 113; that stretch reads WAMLCVPGVLVPEALGLGNWV. Leu129 is a binding site for chlorophyll a. The chain crosses the membrane as a helical span at residues 132–152; it reads PVPWGNLPTILAIEFLAIAFA. Residues Val133, Glu153, and Arg156 each contribute to the chlorophyll b site. 6 residues coordinate chlorophyll a: Lys190, Glu191, Asn194, Arg196, Gln208, and His224.

The protein belongs to the light-harvesting chlorophyll a/b-binding (LHC) protein family. In terms of assembly, the LHC complex consists of chlorophyll a-b binding proteins. Requires Binds at least 14 chlorophylls (8 Chl-a and 6 Chl-b) and carotenoids such as lutein and neoxanthin. as cofactor. Photoregulated by reversible phosphorylation of its threonine residues.

The protein resides in the plastid. The protein localises to the chloroplast thylakoid membrane. Its function is as follows. The light-harvesting complex (LHC) functions as a light receptor, it captures and delivers excitation energy to photosystems with which it is closely associated. In Hordeum vulgare (Barley), this protein is Chlorophyll a-b binding protein 1B-21, chloroplastic (LHC Ib-21).